Consider the following 307-residue polypeptide: Acetyl-coenzyme A carboxylase carboxyl transferase subunit beta (307 aa).

In terms of domain architecture, CoA carboxyltransferase N-terminal spans 25 to 294 (VWTKCTSCEQ…PLVVPIEQPK (270 aa)). Positions 29, 32, 48, and 51 each coordinate Zn(2+). Residues 29-51 (CTSCEQVLYHADLERNLEVCPKC) form a C4-type zinc finger.

Belongs to the AccD/PCCB family. Acetyl-CoA carboxylase is a heterohexamer composed of biotin carboxyl carrier protein (AccB), biotin carboxylase (AccC) and two subunits each of ACCase subunit alpha (AccA) and ACCase subunit beta (AccD). Requires Zn(2+) as cofactor.

The protein localises to the cytoplasm. The catalysed reaction is N(6)-carboxybiotinyl-L-lysyl-[protein] + acetyl-CoA = N(6)-biotinyl-L-lysyl-[protein] + malonyl-CoA. It participates in lipid metabolism; malonyl-CoA biosynthesis; malonyl-CoA from acetyl-CoA: step 1/1. In terms of biological role, component of the acetyl coenzyme A carboxylase (ACC) complex. Biotin carboxylase (BC) catalyzes the carboxylation of biotin on its carrier protein (BCCP) and then the CO(2) group is transferred by the transcarboxylase to acetyl-CoA to form malonyl-CoA. The chain is Acetyl-coenzyme A carboxylase carboxyl transferase subunit beta from Photobacterium profundum (strain SS9).